The sequence spans 207 residues: Uracil phosphoribosyltransferase (207 aa).

5-phospho-alpha-D-ribose 1-diphosphate is bound by residues Arg77, Arg102, and 129–137; that span reads DPMLATGGS. Uracil-binding positions include Ile192 and 197–199; that span reads GDA. Residue Asp198 coordinates 5-phospho-alpha-D-ribose 1-diphosphate.

The protein belongs to the UPRTase family. The cofactor is Mg(2+).

The catalysed reaction is UMP + diphosphate = 5-phospho-alpha-D-ribose 1-diphosphate + uracil. Its pathway is pyrimidine metabolism; UMP biosynthesis via salvage pathway; UMP from uracil: step 1/1. Allosterically activated by GTP. In terms of biological role, catalyzes the conversion of uracil and 5-phospho-alpha-D-ribose 1-diphosphate (PRPP) to UMP and diphosphate. The chain is Uracil phosphoribosyltransferase from Mycoplasma capricolum subsp. capricolum (strain California kid / ATCC 27343 / NCTC 10154).